Here is a 273-residue protein sequence, read N- to C-terminus: 4-hydroxy-tetrahydrodipicolinate reductase (273 aa).

NAD(+) is bound by residues Gly12–Met17 and Glu38. Position 39 (Arg39) interacts with NADP(+). NAD(+) is bound by residues Gly102 to Thr104 and Ala126 to Phe129. Catalysis depends on His159, which acts as the Proton donor/acceptor. His160 is a (S)-2,3,4,5-tetrahydrodipicolinate binding site. Residue Lys163 is the Proton donor of the active site. (S)-2,3,4,5-tetrahydrodipicolinate is bound at residue Gly169–Thr170.

Belongs to the DapB family. As to quaternary structure, homotetramer.

Its subcellular location is the cytoplasm. The catalysed reaction is (S)-2,3,4,5-tetrahydrodipicolinate + NAD(+) + H2O = (2S,4S)-4-hydroxy-2,3,4,5-tetrahydrodipicolinate + NADH + H(+). The enzyme catalyses (S)-2,3,4,5-tetrahydrodipicolinate + NADP(+) + H2O = (2S,4S)-4-hydroxy-2,3,4,5-tetrahydrodipicolinate + NADPH + H(+). It participates in amino-acid biosynthesis; L-lysine biosynthesis via DAP pathway; (S)-tetrahydrodipicolinate from L-aspartate: step 4/4. Catalyzes the conversion of 4-hydroxy-tetrahydrodipicolinate (HTPA) to tetrahydrodipicolinate. This is 4-hydroxy-tetrahydrodipicolinate reductase from Escherichia fergusonii (strain ATCC 35469 / DSM 13698 / CCUG 18766 / IAM 14443 / JCM 21226 / LMG 7866 / NBRC 102419 / NCTC 12128 / CDC 0568-73).